The primary structure comprises 597 residues: Arginine--tRNA ligase (597 aa).

A 'HIGH' region motif is present at residues 125-135 (PNTNKPLHLGH).

This sequence belongs to the class-I aminoacyl-tRNA synthetase family. In terms of assembly, monomer.

The protein resides in the cytoplasm. The catalysed reaction is tRNA(Arg) + L-arginine + ATP = L-arginyl-tRNA(Arg) + AMP + diphosphate. The protein is Arginine--tRNA ligase of Bacteroides fragilis (strain YCH46).